The sequence spans 368 residues: (3S,6E)-nerolidol synthase (368 aa).

Mg(2+) contacts are provided by aspartate 91, asparagine 228, and serine 232. Positions 91-95 (DDLLE) match the DDXXE motif motif.

This sequence belongs to the terpene synthase family. It depends on Mg(2+) as a cofactor. The cofactor is Mn(2+).

The enzyme catalyses (2E,6E)-farnesyl diphosphate + H2O = (3S,6E)-nerolidol + diphosphate. It catalyses the reaction (2E)-geranyl diphosphate + H2O = (S)-linalool + diphosphate. The protein operates within secondary metabolite biosynthesis; terpenoid biosynthesis. Its function is as follows. Sesquiterpene synthase converting farnesyl diphosphate to nerolidol. Also has a monoterpene synthase activity, converting geranyl diphosphate into linalool as the major product. Has no diterpene synthase activity. In Selaginella moellendorffii (Spikemoss), this protein is (3S,6E)-nerolidol synthase.